A 176-amino-acid chain; its full sequence is Lipoprotein signal peptidase (176 aa).

The next 3 helical transmembrane spans lie at 12–32 (WYWV…WVLT), 67–87 (WQKW…TIWL), and 94–114 (VWRL…NLID). Catalysis depends on residues Asp123 and Asp141. A helical transmembrane segment spans residues 133–153 (HFAAFNIADSAICIGAGLIIL).

The protein belongs to the peptidase A8 family.

Its subcellular location is the cell inner membrane. It carries out the reaction Release of signal peptides from bacterial membrane prolipoproteins. Hydrolyzes -Xaa-Yaa-Zaa-|-(S,diacylglyceryl)Cys-, in which Xaa is hydrophobic (preferably Leu), and Yaa (Ala or Ser) and Zaa (Gly or Ala) have small, neutral side chains.. It participates in protein modification; lipoprotein biosynthesis (signal peptide cleavage). Functionally, this protein specifically catalyzes the removal of signal peptides from prolipoproteins. The polypeptide is Lipoprotein signal peptidase (Shewanella sediminis (strain HAW-EB3)).